We begin with the raw amino-acid sequence, 460 residues long: Benzyl alcohol O-benzoyltransferase (460 aa).

Active-site proton acceptor residues include His167 and Asp382.

The protein belongs to the plant acyltransferase family. As to expression, specifically expressed in flowers, mainly in the limb of flowers corollas, and, at low levels, in roots, stems, sepals and leaves.

It carries out the reaction benzyl alcohol + benzoyl-CoA = benzyl benzoate + CoA. The enzyme catalyses benzyl alcohol + acetyl-CoA = benzyl acetate + CoA. The catalysed reaction is 3-hydroxybenzyl alcohol + acetyl-CoA = 3-hydroxy-benzyl acetate + CoA. It catalyses the reaction 3-hydroxybenzyl alcohol + benzoyl-CoA = 3-hydroxy-benzyl benzoate + CoA. It carries out the reaction 2-phenylethanol + benzoyl-CoA = phenethyl benzoate + CoA. The enzyme catalyses (3Z)-hex-3-en-1-ol + benzoyl-CoA = (3Z)-hex-3-en-1-yl benzoate + CoA. The catalysed reaction is (2E)-geraniol + acetyl-CoA = (2E)-geranyl acetate + CoA. It catalyses the reaction butan-1-ol + benzoyl-CoA = butyl benzoate + CoA. It carries out the reaction (2E)-geraniol + benzoyl-CoA = (2E)-geranyl benzoate + CoA. The enzyme catalyses octan-1-ol + benzoyl-CoA = octyl benzoate + CoA. It participates in aromatic compound metabolism; benzoyl-CoA degradation. In terms of biological role, involved in the production of volatile organic compounds (VOCs), including floral volatile benzenoids and phenylpropanoids (FVBP), in flowers of fragrant cultivars (e.g. cv. Mitchell and cv. V26), scent attracting pollinators (e.g. the night-active hawkmoth pollinator Manduca sexta). Acyltransferase that catalyzes the transfer of benzoyl and acetyl moieties to a large variety of potential substrate alcohols, and involved in the formation of volatile esters benzyl benzoate and phenylethyl benzoate from benzoyl-CoA. With acetyl-CoA, mainly active on benzyl alcohol, and, to a lower extent, on 3-hydroxybenzyl alcohol, geraniol, and 2-phenylethanol, but barely active on butanol, 1-octanol, 4-hydroxy-benzyl alcohol, 2-hexanol, cis-3-hexen-1-ol and linalool. With benzoyl-CoA, mainly active on benzyl alcohol, but also efficient on several substrates, including 3-hydroxybenzyl alcohol, 2-phenylethanol, geraniol, butanol, cis-3-hexen-1-ol and 1-octanol. The sequence is that of Benzyl alcohol O-benzoyltransferase from Petunia hybrida (Petunia).